A 116-amino-acid chain; its full sequence is UPF0102 protein PERMA_0362 (116 aa).

The protein belongs to the UPF0102 family.

In Persephonella marina (strain DSM 14350 / EX-H1), this protein is UPF0102 protein PERMA_0362.